The chain runs to 332 residues: 2,3-diketo-L-gulonate reductase (332 aa).

Histidine 44 serves as the catalytic Proton donor. Residues 168–174, 224–225, and 304–306 each bind NAD(+); these read ITMVDMS, WK, and GHE.

This sequence belongs to the LDH2/MDH2 oxidoreductase family. DlgD subfamily. Homodimer.

It is found in the cytoplasm. It carries out the reaction 3-dehydro-L-gulonate + NAD(+) = 2,3-dioxo-L-gulonate + NADH + H(+). The catalysed reaction is 3-dehydro-L-gulonate + NADP(+) = 2,3-dioxo-L-gulonate + NADPH + H(+). Its function is as follows. Catalyzes the reduction of 2,3-diketo-L-gulonate in the presence of NADH, to form 3-keto-L-gulonate. The chain is 2,3-diketo-L-gulonate reductase from Mannheimia succiniciproducens (strain KCTC 0769BP / MBEL55E).